The primary structure comprises 372 residues: Glutamate 5-kinase (372 aa).

Residue K14 participates in ATP binding. Substrate is bound by residues S54, D141, and N153. Residue 173–174 (TD) participates in ATP binding. The region spanning 280–358 (RGTLTLDEGA…DEIEKLLGYV (79 aa)) is the PUA domain.

The protein belongs to the glutamate 5-kinase family.

It is found in the cytoplasm. It carries out the reaction L-glutamate + ATP = L-glutamyl 5-phosphate + ADP. Its pathway is amino-acid biosynthesis; L-proline biosynthesis; L-glutamate 5-semialdehyde from L-glutamate: step 1/2. Catalyzes the transfer of a phosphate group to glutamate to form L-glutamate 5-phosphate. The chain is Glutamate 5-kinase from Stutzerimonas stutzeri (strain A1501) (Pseudomonas stutzeri).